We begin with the raw amino-acid sequence, 499 residues long: Thermostable carboxypeptidase 1 (499 aa).

Residues 6 to 499 (QNETIKQILA…FVRWVKEKYL (494 aa)) enclose the Peptidase M32 domain. An HPF motif is present at residues 238-240 (HPF). Positions 248-252 (DVRIT) match the DXRXT motif. Residue His-269 participates in Co(2+) binding. An HEXXH motif is present at residues 269-273 (HEFGH). Catalysis depends on Glu-270, which acts as the Proton donor/acceptor. Co(2+)-binding residues include His-273 and Glu-299. An HES/GQ motif is present at residues 298–301 (HESQ). The I/NRXXA/SD motif lies at 350–355 (IRTEAD). Positions 405 to 412 (GILQDIHW) match the GXXQDXHW motif.

This sequence belongs to the peptidase M32 family. As to quaternary structure, homodimer. The cofactor is Co(2+). It depends on Mn(2+) as a cofactor.

The catalysed reaction is Release of a C-terminal amino acid with broad specificity, except for -Pro.. Its activity is regulated as follows. EDTA and DTT reversibly abolish carboxypeptidase activity. Functionally, broad specificity carboxypetidase that releases amino acids sequentially from the C-terminus, including neutral, aromatic, polar and basic residues, but not Pro, Gly, Asp and Glu. This Pyrococcus furiosus (strain ATCC 43587 / DSM 3638 / JCM 8422 / Vc1) protein is Thermostable carboxypeptidase 1.